A 66-amino-acid chain; its full sequence is MKASDVRALTADQLKDELAKLKKEQFNLRFQKATGQLEKSSRINEVRKDIARVKTIARQKAAEVKA.

This sequence belongs to the universal ribosomal protein uL29 family.

The sequence is that of Large ribosomal subunit protein uL29 from Rhizobium etli (strain CIAT 652).